The sequence spans 224 residues: uncharacterized protein (224 aa).

Asp52 is an active-site residue.

It belongs to the pseudouridine synthase RluA family.

It catalyses the reaction a uridine in RNA = a pseudouridine in RNA. This is an uncharacterized protein from Haemophilus influenzae (strain ATCC 51907 / DSM 11121 / KW20 / Rd).